Reading from the N-terminus, the 447-residue chain is Tubulin beta chain (447 aa).

The GTP site is built by Gln-11, Glu-69, Ser-138, Gly-142, Thr-143, Gly-144, Asn-204, and Asn-226. Glu-69 is a Mg(2+) binding site. Residues 424–447 (QYQDAGVDEEEEEYEEEAPLEGEE) form a disordered region. The segment covering 429 to 447 (GVDEEEEEYEEEAPLEGEE) has biased composition (acidic residues).

This sequence belongs to the tubulin family. Dimer of alpha and beta chains. A typical microtubule is a hollow water-filled tube with an outer diameter of 25 nm and an inner diameter of 15 nM. Alpha-beta heterodimers associate head-to-tail to form protofilaments running lengthwise along the microtubule wall with the beta-tubulin subunit facing the microtubule plus end conferring a structural polarity. Microtubules usually have 13 protofilaments but different protofilament numbers can be found in some organisms and specialized cells. The cofactor is Mg(2+).

Its subcellular location is the cytoplasm. The protein localises to the cytoskeleton. Its function is as follows. Tubulin is the major constituent of microtubules, a cylinder consisting of laterally associated linear protofilaments composed of alpha- and beta-tubulin heterodimers. Microtubules grow by the addition of GTP-tubulin dimers to the microtubule end, where a stabilizing cap forms. Below the cap, tubulin dimers are in GDP-bound state, owing to GTPase activity of alpha-tubulin. This chain is Tubulin beta chain (tub-2), found in Neurospora crassa (strain ATCC 24698 / 74-OR23-1A / CBS 708.71 / DSM 1257 / FGSC 987).